We begin with the raw amino-acid sequence, 426 residues long: Histidine--tRNA ligase (426 aa).

The protein belongs to the class-II aminoacyl-tRNA synthetase family. Homodimer.

It is found in the cytoplasm. The enzyme catalyses tRNA(His) + L-histidine + ATP = L-histidyl-tRNA(His) + AMP + diphosphate + H(+). The chain is Histidine--tRNA ligase from Streptococcus agalactiae serotype Ia (strain ATCC 27591 / A909 / CDC SS700).